A 240-amino-acid polypeptide reads, in one-letter code: Dihydromonapterin reductase (240 aa).

The Proton acceptor role is filled by Y152.

Belongs to the short-chain dehydrogenases/reductases (SDR) family. FolM subfamily.

The catalysed reaction is (6S)-5,6,7,8-tetrahydrofolate + NADP(+) = 7,8-dihydrofolate + NADPH + H(+). It carries out the reaction 7,8-dihydromonapterin + NADPH + H(+) = 5,6,7,8-tetrahydromonapterin + NADP(+). Functionally, catalyzes the reduction of dihydromonapterin to tetrahydromonapterin. Also has lower activity with dihydrofolate. This is Dihydromonapterin reductase (folM) from Escherichia coli O139:H28 (strain E24377A / ETEC).